A 373-amino-acid chain; its full sequence is Securin (373 aa).

The segment covering 1–10 (MMPANEDKEN) has biased composition (basic and acidic residues). Positions 1–27 (MMPANEDKENNIVYTGNESSGINFPQT) are disordered. Positions 12–26 (IVYTGNESSGINFPQ) are enriched in polar residues. A D-box motif is present at residues 85–88 (RLPL). A disordered region spans residues 177 to 278 (ADSGKNEESS…LPYVPEGYSP (102 aa)). Phosphoserine occurs at positions 185, 186, 212, and 213. The segment covering 185–194 (SSDDDEGNED) has biased composition (acidic residues). The segment covering 225–235 (LFNEQGGLQQL) has biased composition (low complexity). A compositionally biased stretch (basic and acidic residues) spans 240–256 (TKNEQKTKNDKSDKTDD). A Phosphoserine modification is found at Ser277. Ser292 carries the post-translational modification Phosphoserine; by CDC28.

The protein belongs to the securin family. Interacts with the caspase-like ESP1, and prevents its protease activity probably by covering its active site. Interacts with CDC20. In terms of processing, phosphorylated by CDC28. The phosphorylation may be important for ESP1 localization to the nucleus. Ubiquitinated by the anaphase promoting complex (APC) at the onset of anaphase, conducting to its degradation.

It localises to the cytoplasm. It is found in the nucleus. Regulatory protein, which plays a central role in chromosome stability. Probably acts by blocking the action of key proteins. During the mitosis, it blocks Separase/ESP1 function, preventing the proteolysis of the cohesin complex and the subsequent segregation of the chromosomes. At the onset of anaphase, it is ubiquitinated, conducting to its destruction and to the liberation of ESP1. The polypeptide is Securin (PDS1) (Saccharomyces cerevisiae (strain ATCC 204508 / S288c) (Baker's yeast)).